We begin with the raw amino-acid sequence, 257 residues long: Acyl-[acyl-carrier-protein]--UDP-N-acetylglucosamine O-acyltransferase (257 aa).

The protein belongs to the transferase hexapeptide repeat family. LpxA subfamily. Homotrimer.

The protein resides in the cytoplasm. It carries out the reaction a (3R)-hydroxyacyl-[ACP] + UDP-N-acetyl-alpha-D-glucosamine = a UDP-3-O-[(3R)-3-hydroxyacyl]-N-acetyl-alpha-D-glucosamine + holo-[ACP]. It functions in the pathway glycolipid biosynthesis; lipid IV(A) biosynthesis; lipid IV(A) from (3R)-3-hydroxytetradecanoyl-[acyl-carrier-protein] and UDP-N-acetyl-alpha-D-glucosamine: step 1/6. In terms of biological role, involved in the biosynthesis of lipid A, a phosphorylated glycolipid that anchors the lipopolysaccharide to the outer membrane of the cell. The polypeptide is Acyl-[acyl-carrier-protein]--UDP-N-acetylglucosamine O-acyltransferase (Anaeromyxobacter sp. (strain Fw109-5)).